We begin with the raw amino-acid sequence, 162 residues long: Phospholipase A and acyltransferase 3 (162 aa).

The Cytoplasmic portion of the chain corresponds to 1 to 133 (MRAPIPEPKP…VARSDQVRDV (133 aa)). Positions 13–129 (LIEIFRPFYR…LRYGVARSDQ (117 aa)) constitute an LRAT domain. Active-site residues include H23 and H35. Catalysis depends on C113, which acts as the Acyl-thioester intermediate. A helical transmembrane segment spans residues 134–154 (IIAASAAGMGLAAMSLIGVMF). The Lumenal portion of the chain corresponds to 155 to 162 (SRNKRQKQ).

This sequence belongs to the H-rev107 family. Interacts with PPP2R1A; this interaction might decrease PP2A activity.

It is found in the cell membrane. The protein localises to the cytoplasm. Its subcellular location is the cytosol. The protein resides in the perinuclear region. It localises to the peroxisome membrane. It is found in the mitochondrion membrane. The protein localises to the nucleus envelope. Its subcellular location is the lysosome membrane. The protein resides in the endoplasmic reticulum membrane. The catalysed reaction is a 1,2-diacyl-sn-glycero-3-phosphocholine + H2O = a 1-acyl-sn-glycero-3-phosphocholine + a fatty acid + H(+). It catalyses the reaction a 1,2-diacyl-sn-glycero-3-phosphocholine + H2O = a 2-acyl-sn-glycero-3-phosphocholine + a fatty acid + H(+). The enzyme catalyses 1,2-dihexadecanoyl-sn-glycero-3-phosphocholine + H2O = 1-hexadecanoyl-sn-glycero-3-phosphocholine + hexadecanoate + H(+). It carries out the reaction 1,2-dihexadecanoyl-sn-glycero-3-phosphocholine + H2O = 2-hexadecanoyl-sn-glycero-3-phosphocholine + hexadecanoate + H(+). The catalysed reaction is 1-hexadecanoyl-2-(9Z-octadecenoyl)-sn-glycero-3-phosphocholine + H2O = 2-(9Z-octadecenoyl)-sn-glycero-3-phosphocholine + hexadecanoate + H(+). It catalyses the reaction 1-hexadecanoyl-2-(9Z-octadecenoyl)-sn-glycero-3-phosphocholine + H2O = 1-hexadecanoyl-sn-glycero-3-phosphocholine + (9Z)-octadecenoate + H(+). The enzyme catalyses 1-hexadecanoyl-2-(5Z,8Z,11Z,14Z-eicosatetraenoyl)-sn-glycero-3-phosphocholine + H2O = 1-hexadecanoyl-sn-glycero-3-phosphocholine + (5Z,8Z,11Z,14Z)-eicosatetraenoate + H(+). It carries out the reaction 1-hexadecanoyl-2-(5Z,8Z,11Z,14Z-eicosatetraenoyl)-sn-glycero-3-phosphocholine + H2O = 2-(5Z,8Z,11Z,14Z)-eicosatetraenoyl-sn-glycero-3-phosphocholine + hexadecanoate + H(+). The catalysed reaction is 1-hexadecanoyl-2-(9Z,12Z-octadecadienoyl)-sn-glycero-3-phosphoethanolamine + H2O = 1-hexadecanoyl-sn-glycero-3-phosphoethanolamine + (9Z,12Z)-octadecadienoate + H(+). It catalyses the reaction 1-hexadecanoyl-2-(9Z,12Z-octadecadienoyl)-sn-glycero-3-phosphoethanolamine + H2O = 2-(9Z,12Z)-octadecadienoyl-sn-glycero-3-phosphoethanolamine + hexadecanoate + H(+). The enzyme catalyses 1-hexadecanoyl-2-(5Z,8Z,11Z,14Z-eicosatetraenoyl)-sn-glycero-3-phosphoethanolamine + H2O = 1-hexadecanoyl-sn-glycero-3-phosphoethanolamine + (5Z,8Z,11Z,14Z)-eicosatetraenoate + H(+). It carries out the reaction 1-hexadecanoyl-2-(5Z,8Z,11Z,14Z-eicosatetraenoyl)-sn-glycero-3-phosphoethanolamine + H2O = 2-(5Z,8Z,11Z,14Z)-eicosatetraenoyl-sn-glycero-3-phosphoethanolamine + hexadecanoate + H(+). The catalysed reaction is 1-hexanoyl-2-acyl-sn-glycero-3-phosphocholine + H2O = hexanoate + a 2-acyl-sn-glycero-3-phosphocholine + H(+). It catalyses the reaction 1-hexanoyl-2-acyl-sn-glycero-3-phosphocholine + H2O = 1-hexanoyl-sn-glycero-3-phosphocholine + a fatty acid + H(+). The enzyme catalyses 1,2-diheptadecanoyl-sn-glycero-3-phosphoethanolamine + 1-(9Z-octadecenoyl)-2-hexadecanoyl-sn-glycero-3-phosphocholine = 1,2-diheptadecanoyl-sn-glycero-3-phospho-N-hexadecanoyl-ethanolamine + 1-(9Z-octadecenoyl)-sn-glycero-3-phosphocholine + H(+). It carries out the reaction 1,2-diheptadecanoyl-sn-glycero-3-phosphoethanolamine + 1-(9Z-octadecenoyl)-2-hexadecanoyl-sn-glycero-3-phosphocholine = 1,2-diheptadecanoyl-sn-glycero-3-phospho-N-(9Z-octadecenoyl)-ethanolamine + 2-hexadecanoyl-sn-glycero-3-phosphocholine + H(+). The catalysed reaction is 1,2-dihexanoyl-sn-glycero-3-phosphoethanolamine + 2-heptanoyl-sn-glycero-3-phosphocholine = hexanoyl-sn-glycero-3-phosphoethanolamine + 1-hexanoyl-2-heptanoyl-sn-glycero-3-phosphocholine. It catalyses the reaction 1-hexadecanoyl-2-octadecanoyl-sn-glycero-3-phosphocholine + H2O = octadecanoate + 1-hexadecanoyl-sn-glycero-3-phosphocholine + H(+). The enzyme catalyses 1-hexadecanoyl-2-octadecanoyl-sn-glycero-3-phosphocholine + H2O = 2-octadecanoyl-sn-glycero-3-phosphocholine + hexadecanoate + H(+). It carries out the reaction 1-octadecanoyl-2-hexadecanoyl-sn-glycero-3-phosphocholine + H2O = 1-octadecanoyl-sn-glycero-3-phosphocholine + hexadecanoate + H(+). The catalysed reaction is 1-octadecanoyl-2-hexadecanoyl-sn-glycero-3-phosphocholine + H2O = 2-hexadecanoyl-sn-glycero-3-phosphocholine + octadecanoate + H(+). It catalyses the reaction 1-hexadecanoyl-2-(9Z,12Z-octadecadienoyl)-sn-glycero-3-phosphocholine + H2O = (9Z,12Z)-octadecadienoate + 1-hexadecanoyl-sn-glycero-3-phosphocholine + H(+). The enzyme catalyses 1-hexadecanoyl-2-(9Z,12Z-octadecadienoyl)-sn-glycero-3-phosphocholine + H2O = 2-(9Z,12Z-octadecadienoyl)-sn-glycero-3-phosphocholine + hexadecanoate + H(+). It carries out the reaction 1,2-di-(9Z-octadecenoyl)-sn-glycero-3-phosphocholine + H2O = 2-(9Z-octadecenoyl)-sn-glycero-3-phosphocholine + (9Z)-octadecenoate + H(+). The catalysed reaction is 1,2-dihexadecanoyl-sn-glycero-3-phosphocholine + H2O = hexadecanoyl-sn-glycero-3-phosphocholine + hexadecanoate + H(+). It catalyses the reaction 1,2-di-(9Z-octadecenoyl)-sn-glycero-3-phosphocholine + H2O = 1-(9Z-octadecenoyl)-sn-glycero-3-phosphocholine + (9Z)-octadecenoate + H(+). The enzyme catalyses 1,2-di-(9Z-octadecenoyl)-sn-glycero-3-phosphoethanolamine + 1,2-dihexadecanoyl-sn-glycero-3-phosphocholine = hexadecanoyl-sn-glycero-3-phosphocholine + N-hexadecanoyl-1,2-di-(9Z-octadecenoyl)-sn-glycero-3-phosphoethanolamine + H(+). It carries out the reaction 1,2-di-(9Z,12Z-octadecadienoyl)-sn-glycero-3-phosphocholine + H2O = 1-(9Z,12Z)-octadecadienoyl-sn-glycero-3-phosphocholine + (9Z,12Z)-octadecadienoate + H(+). Its function is as follows. Exhibits both phospholipase A1/2 and acyltransferase activities. Shows phospholipase A1 (PLA1) and A2 (PLA2), catalyzing the calcium-independent release of fatty acids from the sn-1 or sn-2 position of glycerophospholipids. For most substrates, PLA1 activity is much higher than PLA2 activity. Shows O-acyltransferase activity, catalyzing the transfer of a fatty acyl group from glycerophospholipid to the hydroxyl group of lysophospholipid. Shows N-acyltransferase activity, catalyzing the calcium-independent transfer of a fatty acyl group at the sn-1 position of phosphatidylcholine (PC) and other glycerophospholipids to the primary amine of phosphatidylethanolamine (PE), forming N-acylphosphatidylethanolamine (NAPE), which serves as precursor for N-acylethanolamines (NAEs). Exhibits high N-acyltransferase activity and low phospholipase A1/2 activity. Required for complete organelle rupture and degradation that occur during eye lens terminal differentiation, when fiber cells that compose the lens degrade all membrane-bound organelles in order to provide lens with transparency to allow the passage of light. Organelle membrane degradation is probably catalyzed by the phospholipase activity. Plays a role in phospholipid metabolism and adipogenesis. This Pongo abelii (Sumatran orangutan) protein is Phospholipase A and acyltransferase 3.